Consider the following 353-residue polypeptide: 2-oxoglutarate-dependent dioxygenase phqC (353 aa).

Residues 199–315 (CASELRLNNY…RRSCAFFLKA (117 aa)) form the Fe2OG dioxygenase domain. Histidine 227, aspartate 229, and histidine 287 together coordinate Fe cation. Arginine 302 serves as a coordination point for 2-oxoglutarate.

This sequence belongs to the iron/ascorbate-dependent oxidoreductase family. Fe(2+) is required as a cofactor.

It participates in alkaloid biosynthesis. Functionally, 2-oxoglutarate-dependent dioxygenase; part of the gene cluster that mediates the biosynthesis of paraherquamide, a fungal indole alkaloid that belongs to a family of natural products containing a characteristic bicyclo[2.2.2]diazaoctane core. The first steps in the biosynthesis of paraherquamide is the production of the beta-methyl-proline precursor from L-isoleucine. They require oxidation of a terminally hydroxylated L-isoleucine to the corresponding aldehyde by enzymes which have still to be identified. Spontaneous cyclization and dehydration would yield the 4-methyl pyrolline-5-carboxylic acid, which is then reduced by the pyrroline-5-carboxylate reductase phqD leading to the beta-methyl-proline precursor. The next step of paraherquamide biosynthesis involves coupling of beta-methyl-proline and L-tryptophan by the bimodular NRPS phqB, to produce a monooxopiperazine intermediate. The reductase (R) domain of phqB utilizes NADPH for hydride transfer to reduce the thioester bond of the T domain-tethered linear dipeptide to a hemithioaminal intermediate, which spontaneously cleaves the C-S bond to release the aldehyde product. This compound undergoes spontaneous cyclization and dehydration to give a dienamine which is reverse prenylated at C-2 by the reverse prenyltransferase phqJ. The other prenyltransferase present in the cluster, phqI may be a redundant gene in the pathway. During biosynthetic assembly, the key step to produce the polycyclic core is catalyzed by the bifunctional reductase and intramolecular [4+2] Diels-Alderase, phqE, resulting in formation of the [2.2.2] diazaoctane intermediate preparaherquamide. Following formation of preparaherquamide, an indole 2,3-epoxidation-initiated pinacol-like rearrangement is catalyzed by the phqK FAD-dependent monooxygenase. The prenyltransferase phqA, the cytochrome P450 monooxygenase phqL, and the FAD-linked oxidoreductase phqH (or the cytochrome P450 monooxygenase phqM), are proposed to be involved in the formation of the pyran ring. The FAD-dependent monooxygenase phqK is likely responsible for generation of the spiro-oxindole, and the N-methylation is likely mediated by the phqN methyltransferase leading to the isolable natural product paraherquamide F. However, the order of these biosynthetic steps has still to be determined. In late-stage paraherquamide biosynthesis, the third P450 monooxygenase, phqO, is probably responsible for the C-14 hydroxylation, transforming paraherquamide F to paraherquamide G, and paraherquamide E to the final product paraherquamide A. The expansion from the 6-membered ring pyran (in paraherquamides F and G) to the 7-membered dioxepin ring (in paraherquamides A and E) represents a poorly understood but intriguing process that probably involves the 2-oxoglutarate-dependent dioxygenase phqC. Finally, the remaining members of the paraherquamide cluster, including phqI as well as phqM (or phqH), do not have a clearly prescribed role and appear to be redundant. The chain is 2-oxoglutarate-dependent dioxygenase phqC from Penicillium fellutanum.